Here is an 82-residue protein sequence, read N- to C-terminus: MTGFTIEGSSLKLLKPQEQGVVSRIDSSRGDFVAQKLRSMNITLGTRVTVEQRSPRFLLRVGADQVALSDPLQDAIYVRLSR.

It belongs to the FeoA family.

In terms of biological role, might be involved in Fe(2+) ion uptake. In Leptolyngbya boryana (Plectonema boryanum), this protein is Putative Fe(2+) transport protein A.